Reading from the N-terminus, the 182-residue chain is Mitochondrial FAD-linked sulfhydryl oxidase erv1 (182 aa).

In terms of domain architecture, ERV/ALR sulfhydryl oxidase spans 75–177 (RLPDVAELGR…FNCQVWSKKA (103 aa)). FAD-binding positions include 81–87 (ELGRSTW), His91, and Tyr120. Intrachain disulfides connect Cys122/Cys125 and Cys153/Cys170. FAD is bound by residues 153 to 165 (CEAH…RLGK) and 176 to 177 (KA).

It depends on FAD as a cofactor.

It localises to the mitochondrion intermembrane space. It catalyses the reaction 2 R'C(R)SH + O2 = R'C(R)S-S(R)CR' + H2O2. In terms of biological role, FAD-dependent sulfhydryl oxidase that catalyzes disulfide bond formation. Required for the import and folding of small cysteine-containing proteins in the mitochondrial intermembrane space (IMS). The sequence is that of Mitochondrial FAD-linked sulfhydryl oxidase erv1 (erv1) from Schizosaccharomyces pombe (strain 972 / ATCC 24843) (Fission yeast).